The primary structure comprises 86 residues: Translation initiation factor IF-1 2 (86 aa).

An S1-like domain is found at 1 to 72 (MAKEELLEME…SKGRITFRHI (72 aa)).

The protein belongs to the IF-1 family. In terms of assembly, component of the 30S ribosomal translation pre-initiation complex which assembles on the 30S ribosome in the order IF-2 and IF-3, IF-1 and N-formylmethionyl-tRNA(fMet); mRNA recruitment can occur at any time during PIC assembly.

It is found in the cytoplasm. In terms of biological role, one of the essential components for the initiation of protein synthesis. Stabilizes the binding of IF-2 and IF-3 on the 30S subunit to which N-formylmethionyl-tRNA(fMet) subsequently binds. Helps modulate mRNA selection, yielding the 30S pre-initiation complex (PIC). Upon addition of the 50S ribosomal subunit IF-1, IF-2 and IF-3 are released leaving the mature 70S translation initiation complex. The chain is Translation initiation factor IF-1 2 from Polynucleobacter asymbioticus (strain DSM 18221 / CIP 109841 / QLW-P1DMWA-1) (Polynucleobacter necessarius subsp. asymbioticus).